Reading from the N-terminus, the 446-residue chain is Sterile alpha motif domain-containing protein 7 (446 aa).

Positions H94–A168 are required for localization to nuclear polycomb bodies. Disordered regions lie at residues N187 to E207 and K225 to D277. Residues P232–A249 show a composition bias toward polar residues. In terms of domain architecture, SAM spans W327–M392.

As to quaternary structure, monomer, homodimer and homooligomer. Component of a Polycomb group (PcG) multiprotein PRC1-like complex. Interacts with PHC2, NR2E3 and SAMD11. Interacts with RNF1 in a PHC2-dependent manner. As to expression, expressed in the retina (at protein level). Expressed in the retinal inner and outer nuclear layers.

It is found in the nucleus. The protein localises to the cytoplasm. Component of a Polycomb group (PcG) multiprotein PRC1-like complex, essential for establishing rod photoreceptor cell identity and function by silencing nonrod gene expression in developing rod photoreceptor cells. Via its association with the PRC1-like complex, promotes epigenetic repressive marks H3K27me3 and H2AK119ub marks in nonrod genes, silencing their transcription. Represses Crx-controlled photoreceptor-specific gene expression. This chain is Sterile alpha motif domain-containing protein 7 (SAMD7), found in Homo sapiens (Human).